The following is a 534-amino-acid chain: Bifunctional purine biosynthesis protein PurH (534 aa).

In terms of domain architecture, MGS-like spans 1–148 (MNTVRPIRRA…KNHQDVTIVV (148 aa)).

Belongs to the PurH family.

It catalyses the reaction (6R)-10-formyltetrahydrofolate + 5-amino-1-(5-phospho-beta-D-ribosyl)imidazole-4-carboxamide = 5-formamido-1-(5-phospho-D-ribosyl)imidazole-4-carboxamide + (6S)-5,6,7,8-tetrahydrofolate. It carries out the reaction IMP + H2O = 5-formamido-1-(5-phospho-D-ribosyl)imidazole-4-carboxamide. It functions in the pathway purine metabolism; IMP biosynthesis via de novo pathway; 5-formamido-1-(5-phospho-D-ribosyl)imidazole-4-carboxamide from 5-amino-1-(5-phospho-D-ribosyl)imidazole-4-carboxamide (10-formyl THF route): step 1/1. It participates in purine metabolism; IMP biosynthesis via de novo pathway; IMP from 5-formamido-1-(5-phospho-D-ribosyl)imidazole-4-carboxamide: step 1/1. This is Bifunctional purine biosynthesis protein PurH from Shewanella denitrificans (strain OS217 / ATCC BAA-1090 / DSM 15013).